The primary structure comprises 1785 residues: BCL-6 corepressor-like protein 1 (1785 aa).

3 disordered regions span residues 65 to 101, 113 to 137, and 343 to 368; these read VGSG…KMDY, VPLS…NSRA, and ASTP…GPPS. The span at 83-97 shows a compositional bias: basic and acidic residues; it reads KLGHKSEDKPDDPQP. Ser496 carries the phosphoserine modification. Composition is skewed to polar residues over residues 527 to 539 and 586 to 600; these read PCTS…TTQP and GTEQ…TFSP. Disordered stretches follow at residues 527–550 and 562–646; these read PCTS…PLAD and PTPQ…PMPV. A phosphoserine mark is found at Ser599 and Ser613. Residue Lys747 forms a Glycyl lysine isopeptide (Lys-Gly) (interchain with G-Cter in SUMO2) linkage. 3 disordered regions span residues 753-781, 876-901, and 937-977; these read IIDQ…QPST, SSSE…EQDP, and VQPS…LKLA. Ser1029 and Ser1033 each carry phosphoserine. Lys1092 is covalently cross-linked (Glycyl lysine isopeptide (Lys-Gly) (interchain with G-Cter in SUMO2)). Disordered stretches follow at residues 1107-1293 and 1312-1487; these read PDDV…QGRR and WDTN…PEAR. At Ser1162 the chain carries Phosphoserine. Positions 1176 to 1185 are enriched in basic residues; that stretch reads VRGKHKHRKP. Over residues 1195–1213 the composition is skewed to basic and acidic residues; the sequence is KRADSHEEGSLEKKAKSSF. Residues 1222-1234 are compositionally biased toward polar residues; the sequence is STRTRSQSGSICS. The span at 1271–1284 shows a compositional bias: basic and acidic residues; the sequence is TQRDTQYRSHHAQD. Over residues 1314–1324 the composition is skewed to acidic residues; that stretch reads TNEEEEEEEEE. The Nuclear localization signal motif lies at 1328-1336; sequence KRKKRRRQK. Over residues 1328–1339 the composition is skewed to basic residues; the sequence is KRKKRRRQKSRK. Positions 1352–1363 are enriched in basic and acidic residues; it reads EQRRKGRADLKA. Residues 1440–1449 show a composition bias toward polar residues; it reads WSQQKTRSPK. Positions 1461 to 1480 are enriched in low complexity; sequence TPSKSRSASSEEASESPTAR. Ser1476 carries the post-translational modification Phosphoserine. ANK repeat units lie at residues 1529 to 1558, 1562 to 1591, and 1595 to 1623; these read AGYT…NVNC, DGTR…DPTL, and SGQT…QGRA. Residues 1668–1785 are PCGF Ub-like fold domain (PUFD); required for the interaction with the KDM2B-SKP1 heterodimeric complex; that stretch reads DDFMFELSDK…SEVEFQSCNS (118 aa).

It belongs to the BCOR family. In terms of assembly, interacts with PCGF1, forming heterodimers. The PCGF1-BCORL1 heterodimeric complex interacts with the KDM2B-SKP1 heterodimeric complex to form a homotetrameric polycomb repression complex 1 (PRC1.1). Interacts with SKP1. Interacts with CTBP1, HDAC4, HDAC5 and HDAC7. As to expression, detected in testis and prostate. Detected at lower levels in peripheral blood leukocytes and spleen. Mainly expressed in the spermatogonia and primary spermatocytes.

It is found in the nucleus. Its function is as follows. Transcriptional corepressor. May specifically inhibit gene expression when recruited to promoter regions by sequence-specific DNA-binding proteins such as BCL6. This repression may be mediated at least in part by histone deacetylase activities which can associate with this corepressor. The sequence is that of BCL-6 corepressor-like protein 1 from Homo sapiens (Human).